The following is a 188-amino-acid chain: MALAMLVLVVSPWSAARGVLRNYWERLLRKLPQSRPGFPSPPWGPALAVQGPAMFTEPANDTSGSKENSSLLDSIFWMAAPKNRRTIEVNRCRRRNPQKLIKVKNNIDVCPECGHLKQKHVLCAYCYEKVCKETAEIRRQIGKQEGGPFKAPTIETVVLYTGETPSEQDQGKRIIERDRKRPSWFTQN.

Residues cysteine 110, cysteine 113, cysteine 123, and cysteine 126 each contribute to the Zn(2+) site. The segment at 164–188 (TPSEQDQGKRIIERDRKRPSWFTQN) is disordered. Over residues 169 to 181 (DQGKRIIERDRKR) the composition is skewed to basic and acidic residues.

It belongs to the bacterial ribosomal protein bL32 family. As to quaternary structure, component of the mitochondrial large ribosomal subunit (mt-LSU). Mature mammalian 55S mitochondrial ribosomes consist of a small (28S) and a large (39S) subunit. The 28S small subunit contains a 12S ribosomal RNA (12S mt-rRNA) and 30 different proteins. The 39S large subunit contains a 16S rRNA (16S mt-rRNA), a copy of mitochondrial valine transfer RNA (mt-tRNA(Val)), which plays an integral structural role, and 52 different proteins. bL32m has a zinc binding site. In terms of processing, MRPL32 precursor is processed by the m-AAA protease (composed of AFG3L2 and SPG7), which cleaves the N-terminal transit peptide. Cleavage by the m-AAA protease takes place prior to assembly into the large subunit, an essential step for mitochondrial ribosome (mitoribosome) assembly. Proper processing by the m-AAA protease is dependent on the zinc-binding region within the tightly folded C-terminal domain of MRPL32: zinc-dependent folding halts degradation initiated from the N-terminus and triggers the release of mature MRPL32.

The protein resides in the mitochondrion. Functionally, component of the mitochondrial large ribosomal subunit (mt-LSU). The mitochondrial ribosome (mitoribosome) is a large ribonucleoprotein complex responsible for the synthesis of proteins inside mitochondria. The protein is Large ribosomal subunit protein bL32m (MRPL32) of Homo sapiens (Human).